Here is a 123-residue protein sequence, read N- to C-terminus: Small ribosomal subunit protein uS12 (123 aa).

The residue at position 89 (Asp-89) is a 3-methylthioaspartic acid.

Belongs to the universal ribosomal protein uS12 family. Part of the 30S ribosomal subunit. Contacts proteins S8 and S17. May interact with IF1 in the 30S initiation complex.

In terms of biological role, with S4 and S5 plays an important role in translational accuracy. Functionally, interacts with and stabilizes bases of the 16S rRNA that are involved in tRNA selection in the A site and with the mRNA backbone. Located at the interface of the 30S and 50S subunits, it traverses the body of the 30S subunit contacting proteins on the other side and probably holding the rRNA structure together. The combined cluster of proteins S8, S12 and S17 appears to hold together the shoulder and platform of the 30S subunit. The protein is Small ribosomal subunit protein uS12 of Orientia tsutsugamushi (strain Boryong) (Rickettsia tsutsugamushi).